The primary structure comprises 457 residues: Sensor protein CpxA (457 aa).

Topologically, residues methionine 1–alanine 7 are cytoplasmic. Residues arginine 8 to lysine 29 form a helical membrane-spanning segment. The Periplasmic portion of the chain corresponds to leucine 30–arginine 163. The chain crosses the membrane as a helical span at residues proline 164–tryptophan 184. The region spanning serine 185 to threonine 237 is the HAMP domain. Topologically, residues serine 185–serine 457 are cytoplasmic. Residues aspartate 245–lysine 455 enclose the Histidine kinase domain. Histidine 248 is modified (phosphohistidine; by autocatalysis).

It localises to the cell inner membrane. It catalyses the reaction ATP + protein L-histidine = ADP + protein N-phospho-L-histidine.. Its function is as follows. This protein is involved in several diverse cellular processes, such as the functioning of acetohydroxyacid synthetase I, in the biosynthesis of isoleucine and valine, the TraJ protein activation activity for tra gene expression in F plasmid, and the synthesis, translocation, or stability of cell envelope proteins. Activates CpxR by phosphorylation. The polypeptide is Sensor protein CpxA (cpxA) (Escherichia coli O157:H7).